Here is a 351-residue protein sequence, read N- to C-terminus: Heat-inducible transcription repressor HrcA (351 aa).

This sequence belongs to the HrcA family.

Negative regulator of class I heat shock genes (grpE-dnaK-dnaJ and groELS operons). Prevents heat-shock induction of these operons. This Acetivibrio thermocellus (strain ATCC 27405 / DSM 1237 / JCM 9322 / NBRC 103400 / NCIMB 10682 / NRRL B-4536 / VPI 7372) (Clostridium thermocellum) protein is Heat-inducible transcription repressor HrcA.